The primary structure comprises 500 residues: NAD(P)H-quinone oxidoreductase chain 4, chloroplastic (500 aa).

A run of 14 helical transmembrane segments spans residues Phe-4–Leu-24, Ile-37–Leu-57, Leu-87–Ile-107, Leu-113–Ser-130, Leu-134–Met-154, Phe-167–Leu-187, Ile-211–His-231, His-242–Ile-262, Ala-272–Ala-292, Met-313–Leu-333, Gln-334–Asp-354, Leu-386–Thr-406, Leu-417–Leu-437, and Leu-462–Val-482.

It belongs to the complex I subunit 4 family.

The protein localises to the plastid. The protein resides in the chloroplast thylakoid membrane. It catalyses the reaction a plastoquinone + NADH + (n+1) H(+)(in) = a plastoquinol + NAD(+) + n H(+)(out). It carries out the reaction a plastoquinone + NADPH + (n+1) H(+)(in) = a plastoquinol + NADP(+) + n H(+)(out). The protein is NAD(P)H-quinone oxidoreductase chain 4, chloroplastic (ndhD) of Triticum aestivum (Wheat).